Here is a 90-residue protein sequence, read N- to C-terminus: DNA-binding protein HTa (90 aa).

The protein belongs to the bacterial histone-like protein family. As to quaternary structure, homotetramer.

Its function is as follows. Histone-like DNA-binding protein which is capable of wrapping DNA to stabilize it, and thus to prevent its denaturation under extreme environmental conditions. The sequence is that of DNA-binding protein HTa from Thermoplasma acidophilum (strain ATCC 25905 / DSM 1728 / JCM 9062 / NBRC 15155 / AMRC-C165).